A 321-amino-acid polypeptide reads, in one-letter code: Fe-S cluster assembly protein DRE2 (321 aa).

The segment at 1-131 (MERMLLLSPP…KPDFGPENIV (131 aa)) is N-terminal SAM-like domain. The linker stretch occupies residues 132 to 213 (PLKLGKRKPV…EETLLDGEDM (82 aa)). Residues Cys223, Cys234, Cys237, and Cys239 each coordinate [2Fe-2S] cluster. The fe-S binding site A stretch occupies residues 223-239 (CRPKAGKRRRACKDCTC). Cys284, Cys287, Cys295, and Cys298 together coordinate [4Fe-4S] cluster. Short sequence motifs (cx2C motif) lie at residues 284 to 287 (CGNC) and 295 to 298 (CDGC). Residues 284–298 (CGNCALGDAFRCDGC) are fe-S binding site B.

This sequence belongs to the anamorsin family. As to quaternary structure, monomer. Interacts with TAH18. Interacts with MIA40. It depends on [2Fe-2S] cluster as a cofactor. [4Fe-4S] cluster is required as a cofactor.

The protein resides in the cytoplasm. The protein localises to the mitochondrion intermembrane space. Functionally, component of the cytosolic iron-sulfur (Fe-S) protein assembly (CIA) machinery required for the maturation of extramitochondrial Fe-S proteins. Part of an electron transfer chain functioning in an early step of cytosolic Fe-S biogenesis, facilitating the de novo assembly of a [4Fe-4S] cluster on the scaffold complex CFD1-NBP35. Electrons are transferred to DRE2 from NADPH via the FAD- and FMN-containing protein TAH18. TAH18-DRE2 are also required for the assembly of the diferric tyrosyl radical cofactor of ribonucleotide reductase (RNR), probably by providing electrons for reduction during radical cofactor maturation in the catalytic small subunit RNR2. This Coccidioides posadasii (strain C735) (Valley fever fungus) protein is Fe-S cluster assembly protein DRE2.